A 272-amino-acid chain; its full sequence is Putative phosphoenolpyruvate synthase regulatory protein (272 aa).

An ADP-binding site is contributed by 152–159 (GVSRSGKT).

Belongs to the pyruvate, phosphate/water dikinase regulatory protein family. PSRP subfamily.

The enzyme catalyses [pyruvate, water dikinase] + ADP = [pyruvate, water dikinase]-phosphate + AMP + H(+). It catalyses the reaction [pyruvate, water dikinase]-phosphate + phosphate + H(+) = [pyruvate, water dikinase] + diphosphate. Functionally, bifunctional serine/threonine kinase and phosphorylase involved in the regulation of the phosphoenolpyruvate synthase (PEPS) by catalyzing its phosphorylation/dephosphorylation. In Alcanivorax borkumensis (strain ATCC 700651 / DSM 11573 / NCIMB 13689 / SK2), this protein is Putative phosphoenolpyruvate synthase regulatory protein.